The sequence spans 678 residues: Methionine--tRNA ligase (678 aa).

Positions 14–24 match the 'HIGH' region motif; sequence PYANGSIHLGH. Cysteine 145, cysteine 148, cysteine 158, and cysteine 161 together coordinate Zn(2+). A 'KMSKS' region motif is present at residues 331–335; sequence KMSKS. Lysine 334 lines the ATP pocket. The tRNA-binding domain occupies 576–678; it reads AFAAVDLRIA…SGAKPGQRVK (103 aa).

Belongs to the class-I aminoacyl-tRNA synthetase family. MetG type 1 subfamily. Homodimer. Zn(2+) is required as a cofactor.

Its subcellular location is the cytoplasm. It catalyses the reaction tRNA(Met) + L-methionine + ATP = L-methionyl-tRNA(Met) + AMP + diphosphate. In terms of biological role, is required not only for elongation of protein synthesis but also for the initiation of all mRNA translation through initiator tRNA(fMet) aminoacylation. The chain is Methionine--tRNA ligase from Pseudomonas aeruginosa (strain UCBPP-PA14).